Reading from the N-terminus, the 511-residue chain is Bifunctional purine biosynthesis protein PurH (511 aa).

In terms of domain architecture, MGS-like spans M1–V145.

This sequence belongs to the PurH family.

It catalyses the reaction (6R)-10-formyltetrahydrofolate + 5-amino-1-(5-phospho-beta-D-ribosyl)imidazole-4-carboxamide = 5-formamido-1-(5-phospho-D-ribosyl)imidazole-4-carboxamide + (6S)-5,6,7,8-tetrahydrofolate. The catalysed reaction is IMP + H2O = 5-formamido-1-(5-phospho-D-ribosyl)imidazole-4-carboxamide. It participates in purine metabolism; IMP biosynthesis via de novo pathway; 5-formamido-1-(5-phospho-D-ribosyl)imidazole-4-carboxamide from 5-amino-1-(5-phospho-D-ribosyl)imidazole-4-carboxamide (10-formyl THF route): step 1/1. Its pathway is purine metabolism; IMP biosynthesis via de novo pathway; IMP from 5-formamido-1-(5-phospho-D-ribosyl)imidazole-4-carboxamide: step 1/1. This chain is Bifunctional purine biosynthesis protein PurH, found in Bacillus cereus (strain Q1).